The sequence spans 494 residues: Poly(3-hydroxybutyrate) depolymerase (494 aa).

A signal peptide spans M1–A25. S45 (nucleophile) is an active-site residue. Residues D132 and H166 each act as charge relay system in the active site. Residues A347–A431 enclose the Fibronectin type-III domain.

Belongs to the AB hydrolase superfamily. Lipase family.

The protein resides in the secreted. It catalyses the reaction [(3R)-hydroxybutanoate](n) + H2O = [(3R)-hydroxybutanoate](n-2) + (3R)-hydroxybutanoate dimer + H(+). The catalysed reaction is [(3R)-hydroxybutanoate](n) + H2O = [(3R)-hydroxybutanoate](n-1) + (R)-3-hydroxybutanoate + H(+). It carries out the reaction (3R)-hydroxybutanoate dimer + H2O = 2 (R)-3-hydroxybutanoate + H(+). In terms of biological role, catalyzes the hydrolysis of poly(3-hydroxybutyrate) (PHB) film, producing the monomer and dimer of 3-hydroxybutyrate (3HB), while the 3HB trimer and tetramer are not formed. The protein is Poly(3-hydroxybutyrate) depolymerase of Delftia acidovorans (Pseudomonas acidovorans).